Consider the following 394-residue polypeptide: Elongation factor Tu 2 (394 aa).

Positions 10-204 (KPHVNVGTIG…HLDTYIPEPE (195 aa)) constitute a tr-type G domain. The segment at 19–26 (GHVDHGKT) is G1. 19–26 (GHVDHGKT) serves as a coordination point for GTP. T26 contacts Mg(2+). Residues 60 to 64 (GITIN) are G2. Residues 81–84 (DCPG) are G3. Residues 81–85 (DCPGH) and 136–139 (NKCD) contribute to the GTP site. Residues 136–139 (NKCD) form a G4 region. Positions 174–176 (SAL) are G5.

This sequence belongs to the TRAFAC class translation factor GTPase superfamily. Classic translation factor GTPase family. EF-Tu/EF-1A subfamily. As to quaternary structure, monomer.

The protein localises to the cytoplasm. The enzyme catalyses GTP + H2O = GDP + phosphate + H(+). Functionally, GTP hydrolase that promotes the GTP-dependent binding of aminoacyl-tRNA to the A-site of ribosomes during protein biosynthesis. This is Elongation factor Tu 2 from Haemophilus influenzae (strain 86-028NP).